The following is a 104-amino-acid chain: Cuticle protein 67, isoform B (104 aa).

7 repeat units span residues 7–10 (AAPA), 14–17 (AAPA), 21–24 (AAPA), 28–31 (AAPA), 85–88 (AAPA), 92–95 (AAPA), and 98–101 (AAPA).

In terms of biological role, component of the cuticle of migratory locust which contains more than 100 different structural proteins. This is Cuticle protein 67, isoform B from Locusta migratoria (Migratory locust).